The sequence spans 200 residues: Imidazoleglycerol-phosphate dehydratase (200 aa).

The protein belongs to the imidazoleglycerol-phosphate dehydratase family.

It is found in the cytoplasm. The catalysed reaction is D-erythro-1-(imidazol-4-yl)glycerol 3-phosphate = 3-(imidazol-4-yl)-2-oxopropyl phosphate + H2O. It participates in amino-acid biosynthesis; L-histidine biosynthesis; L-histidine from 5-phospho-alpha-D-ribose 1-diphosphate: step 6/9. The sequence is that of Imidazoleglycerol-phosphate dehydratase from Chlorobium phaeovibrioides (strain DSM 265 / 1930) (Prosthecochloris vibrioformis (strain DSM 265)).